Consider the following 558-residue polypeptide: Protein NRT1/ PTR FAMILY 2.3 (558 aa).

The next 12 membrane-spanning stretches (helical) occupy residues 33–53 (TLLG…VFLI), 69–89 (VANG…DSFF), 92–112 (IPVI…LTLI), 128–148 (VLCT…LALV), 176–196 (FFNW…TAIV), 203–223 (SWKL…IVFV), 329–349 (LWLS…LIVL), 371–391 (VIII…VFPM), 403–423 (LQKV…SAVV), 439–459 (VLWL…QFPA), 478–498 (SLTS…IDLI), and 517–537 (VYWL…VCSW).

Belongs to the major facilitator superfamily. Proton-dependent oligopeptide transporter (POT/PTR) (TC 2.A.17) family. In terms of tissue distribution, expressed in flowers, siliques and root epidermis or cortex. Detected in shoots.

The protein resides in the membrane. In terms of biological role, transporter involved in a passive nitrate efflux. The polypeptide is Protein NRT1/ PTR FAMILY 2.3 (NPF2.3) (Arabidopsis thaliana (Mouse-ear cress)).